A 251-amino-acid polypeptide reads, in one-letter code: Imidazole glycerol phosphate synthase subunit HisF (251 aa).

Active-site residues include D11 and D130.

Belongs to the HisA/HisF family. Heterodimer of HisH and HisF.

It localises to the cytoplasm. It catalyses the reaction 5-[(5-phospho-1-deoxy-D-ribulos-1-ylimino)methylamino]-1-(5-phospho-beta-D-ribosyl)imidazole-4-carboxamide + L-glutamine = D-erythro-1-(imidazol-4-yl)glycerol 3-phosphate + 5-amino-1-(5-phospho-beta-D-ribosyl)imidazole-4-carboxamide + L-glutamate + H(+). It functions in the pathway amino-acid biosynthesis; L-histidine biosynthesis; L-histidine from 5-phospho-alpha-D-ribose 1-diphosphate: step 5/9. In terms of biological role, IGPS catalyzes the conversion of PRFAR and glutamine to IGP, AICAR and glutamate. The HisF subunit catalyzes the cyclization activity that produces IGP and AICAR from PRFAR using the ammonia provided by the HisH subunit. In Pelodictyon phaeoclathratiforme (strain DSM 5477 / BU-1), this protein is Imidazole glycerol phosphate synthase subunit HisF.